A 255-amino-acid chain; its full sequence is Acetylglutamate kinase (255 aa).

Substrate contacts are provided by residues G40–G41, R62, and N153.

It belongs to the acetylglutamate kinase family. ArgB subfamily.

The protein resides in the cytoplasm. It carries out the reaction N-acetyl-L-glutamate + ATP = N-acetyl-L-glutamyl 5-phosphate + ADP. The protein operates within amino-acid biosynthesis; L-arginine biosynthesis; N(2)-acetyl-L-ornithine from L-glutamate: step 2/4. Functionally, catalyzes the ATP-dependent phosphorylation of N-acetyl-L-glutamate. The polypeptide is Acetylglutamate kinase (Bacillus cereus (strain B4264)).